A 245-amino-acid chain; its full sequence is tRNA1(Val) (adenine(37)-N6)-methyltransferase (245 aa).

The protein belongs to the methyltransferase superfamily. tRNA (adenine-N(6)-)-methyltransferase family.

It localises to the cytoplasm. The enzyme catalyses adenosine(37) in tRNA1(Val) + S-adenosyl-L-methionine = N(6)-methyladenosine(37) in tRNA1(Val) + S-adenosyl-L-homocysteine + H(+). Its function is as follows. Specifically methylates the adenine in position 37 of tRNA(1)(Val) (anticodon cmo5UAC). The sequence is that of tRNA1(Val) (adenine(37)-N6)-methyltransferase from Erwinia tasmaniensis (strain DSM 17950 / CFBP 7177 / CIP 109463 / NCPPB 4357 / Et1/99).